The sequence spans 603 residues: Conglutin beta 2 (603 aa).

The first 30 residues, 1-30 (MANMRVKFPTLVLLLGIVFLMAVSIGIAYG), serve as a signal peptide directing secretion. Over residues 36–105 (KNHERPQERE…REPSRGREQE (70 aa)) the composition is skewed to basic and acidic residues. Disordered stretches follow at residues 36 to 177 (KNHE…RNPY), 343 to 363 (DGQEDEEQSRGQEQSHQDQGV), and 375 to 399 (LRKHAQSSSGKGKPSESGPFNLRSD). Positions 137–147 (QGSSSSSGRQS) are enriched in low complexity. Positions 148 to 172 (GYERREQREEREQQQEQDSRSESRR) are enriched in basic and acidic residues. Residues 177–335 (YYFSYERFQT…TFNTRYEEIQ (159 aa)) form the Cupin type-1 1 domain. Over residues 381–393 (SSSGKGKPSESGP) the composition is skewed to low complexity. A Cupin type-1 2 domain is found at 394 to 554 (FNLRSDEPIY…TFPGSVEDVE (161 aa)). The N-linked (GlcNAc...) asparagine glycan is linked to Asn504. Positions 564–574 (YFANAQPQQQQ) are enriched in low complexity. Residues 564 to 583 (YFANAQPQQQQQREKEGRRG) form a disordered region.

It belongs to the 7S seed storage protein family. As to quaternary structure, component of globulins complexes which accumulate in seeds.

In terms of biological role, seed storage protein. Accumulates during seed development and is hydrolyzed after germination to provide a carbon and nitrogen source for the developing seedling. The chain is Conglutin beta 2 from Lupinus angustifolius (Narrow-leaved blue lupine).